The sequence spans 236 residues: Small ribosomal subunit protein uS2c (236 aa).

This sequence belongs to the universal ribosomal protein uS2 family.

Its subcellular location is the plastid. It localises to the chloroplast. In Coffea arabica (Arabian coffee), this protein is Small ribosomal subunit protein uS2c (rps2).